The sequence spans 345 residues: N-acetyl-gamma-glutamyl-phosphate reductase (345 aa).

Cysteine 151 is a catalytic residue.

This sequence belongs to the NAGSA dehydrogenase family. Type 1 subfamily.

Its subcellular location is the cytoplasm. The enzyme catalyses N-acetyl-L-glutamate 5-semialdehyde + phosphate + NADP(+) = N-acetyl-L-glutamyl 5-phosphate + NADPH + H(+). Its pathway is amino-acid biosynthesis; L-arginine biosynthesis; N(2)-acetyl-L-ornithine from L-glutamate: step 3/4. Functionally, catalyzes the NADPH-dependent reduction of N-acetyl-5-glutamyl phosphate to yield N-acetyl-L-glutamate 5-semialdehyde. In Clostridium novyi (strain NT), this protein is N-acetyl-gamma-glutamyl-phosphate reductase.